A 615-amino-acid chain; its full sequence is Chaperone protein DnaK (615 aa).

The residue at position 174 (T174) is a Phosphothreonine; by autocatalysis. The segment at 581–615 (QAAPKDGAEGDAKSADDNTVDGDFEEVDPNKDDKK) is disordered. Positions 586–596 (DGAEGDAKSAD) are enriched in basic and acidic residues. The segment covering 598-607 (NTVDGDFEEV) has biased composition (acidic residues).

Belongs to the heat shock protein 70 family.

In terms of biological role, acts as a chaperone. The polypeptide is Chaperone protein DnaK (Leuconostoc mesenteroides subsp. mesenteroides (strain ATCC 8293 / DSM 20343 / BCRC 11652 / CCM 1803 / JCM 6124 / NCDO 523 / NBRC 100496 / NCIMB 8023 / NCTC 12954 / NRRL B-1118 / 37Y)).